Consider the following 127-residue polypeptide: RxLR effector protein SFI3 (127 aa).

Residues 1 to 20 (MRFLLVAVVAMMALVSSSTA) form the signal peptide. A RxLR-dEER motif is present at residues 40–62 (RSLRNTEERSIAAILAEAGEEDR). The WY-domain stretch occupies residues 72-107 (WYKAKLTPTQVKTVLGVSQAEMNNVAKQLQRLYLGY).

Belongs to the RxLR effector family. As to quaternary structure, forms an unusual trans-homodimer. Interacts with host UBK.

The protein localises to the secreted. Its subcellular location is the host nucleus. The protein resides in the host nucleolus. In terms of biological role, effector that suppresses flg22-induced post-translational MAP kinase activation in potato and tomato, but not in Arabidopsis. The perception of highly conserved pathogen- or microbe-associated molecular patterns (PAMPs/MAMPs), such as flg22, triggers converging signaling pathways recruiting MAP kinase cascades and inducing transcriptional re-programming, yielding a generic antimicrobial response. Does not suppress programmed cell death triggered by the P.infestans elicitin infestin-1 (INF1), or by co-expression of tomato Cf4 with Cladosporium fulvum Avr4. Suppresses early pattern-triggered immunity (PTI) via interaction with the U-box-kinase protein UBK, a positive regulator of specific PTI pathways in both potato and Nicotiana benthamiana. The chain is RxLR effector protein SFI3 from Phytophthora infestans (strain T30-4) (Potato late blight agent).